Here is a 334-residue protein sequence, read N- to C-terminus: Phosphate acyltransferase (334 aa).

Belongs to the PlsX family. In terms of assembly, homodimer. Probably interacts with PlsY.

Its subcellular location is the cytoplasm. It carries out the reaction a fatty acyl-[ACP] + phosphate = an acyl phosphate + holo-[ACP]. The protein operates within lipid metabolism; phospholipid metabolism. Catalyzes the reversible formation of acyl-phosphate (acyl-PO(4)) from acyl-[acyl-carrier-protein] (acyl-ACP). This enzyme utilizes acyl-ACP as fatty acyl donor, but not acyl-CoA. The sequence is that of Phosphate acyltransferase from Caldicellulosiruptor bescii (strain ATCC BAA-1888 / DSM 6725 / KCTC 15123 / Z-1320) (Anaerocellum thermophilum).